The chain runs to 352 residues: NAD(P)H oxidoreductase RTN4IP1, mitochondrial (352 aa).

Positions 11 to 348 (ESLDLLEYKT…NSNSNGKIII (338 aa)) constitute an Enoyl reductase (ER) domain. Residues Val-165, Tyr-206, Ala-296, and Phe-298 each contribute to the NADPH site.

Belongs to the zinc-containing alcohol dehydrogenase family. Quinone oxidoreductase subfamily.

It is found in the mitochondrion matrix. It catalyses the reaction a quinone + NADH + H(+) = a quinol + NAD(+). It carries out the reaction a quinone + NADPH + H(+) = a quinol + NADP(+). It functions in the pathway cofactor biosynthesis; ubiquinone biosynthesis. Functionally, NAD(P)H oxidoreductase involved in the ubiquinone biosynthetic pathway. Required for the O-methyltransferase activity of coq3. The polypeptide is NAD(P)H oxidoreductase RTN4IP1, mitochondrial (rtn4ip1) (Dictyostelium discoideum (Social amoeba)).